Here is a 260-residue protein sequence, read N- to C-terminus: Meiotic recombination protein rec6 (260 aa).

The interval glutamine 197–alanine 222 is disordered. Positions serine 199–serine 213 are enriched in low complexity.

The protein belongs to the TOP6B-like family. As to quaternary structure, component of the DSB catalytic core (DSBC) complex, composed of at least rec12, rec6 and rec14. The complex interacts with mde2.

Its function is as follows. Required for formation of the rec12-mediated double-strand breaks (DSBs) that initiate meiotic recombination. May be involved primarily in the early steps of meiotic recombination. This Schizosaccharomyces pombe (strain 972 / ATCC 24843) (Fission yeast) protein is Meiotic recombination protein rec6.